A 197-amino-acid polypeptide reads, in one-letter code: Probable chorismate pyruvate-lyase (197 aa).

Residues arginine 66, leucine 104, and glutamate 169 each contribute to the substrate site.

It belongs to the UbiC family.

The protein resides in the cytoplasm. It carries out the reaction chorismate = 4-hydroxybenzoate + pyruvate. The protein operates within cofactor biosynthesis; ubiquinone biosynthesis. Removes the pyruvyl group from chorismate, with concomitant aromatization of the ring, to provide 4-hydroxybenzoate (4HB) for the ubiquinone pathway. In Albidiferax ferrireducens (strain ATCC BAA-621 / DSM 15236 / T118) (Rhodoferax ferrireducens), this protein is Probable chorismate pyruvate-lyase.